We begin with the raw amino-acid sequence, 384 residues long: Guanine nucleotide-binding protein alpha-2 subunit (384 aa).

Residues 1–23 (MGLVCSRNRRYRDSDPEENAQAA) form a disordered region. Residue glycine 2 is the site of N-myristoyl glycine attachment. Cysteine 5 carries the S-palmitoyl cysteine lipid modification. Positions 38–384 (HIQKLLLLGA…RRNLFEAGLL (347 aa)) constitute a G-alpha domain. A G1 motif region spans residues 41–54 (KLLLLGAGESGKST). GTP contacts are provided by glutamate 49, serine 50, glycine 51, lysine 52, serine 53, threonine 54, aspartate 163, leucine 188, tyrosine 189, threonine 194, glycine 222, asparagine 288, lysine 289, aspartate 291, and alanine 356. Residue serine 53 coordinates Mg(2+). The G2 motif stretch occupies residues 186–194 (DVLYARVRT). A Mg(2+)-binding site is contributed by threonine 194. The segment at 215–224 (YRLFDVGGQR) is G3 motif. The G4 motif stretch occupies residues 284 to 291 (MLFLNKFD). A G5 motif region spans residues 354 to 359 (TTALDQ).

It belongs to the G-alpha family. As to quaternary structure, g proteins are composed of 3 units; alpha, beta and gamma. The alpha chain contains the guanine nucleotide binding site. Mg(2+) serves as cofactor.

In terms of biological role, guanine nucleotide-binding proteins (G proteins) are involved as modulators or transducers in various transmembrane signaling systems. This is Guanine nucleotide-binding protein alpha-2 subunit (GPA2) from Pisum sativum (Garden pea).